Reading from the N-terminus, the 156-residue chain is Cyanate hydratase (156 aa).

Catalysis depends on residues R96, E99, and S122.

Belongs to the cyanase family.

The enzyme catalyses cyanate + hydrogencarbonate + 3 H(+) = NH4(+) + 2 CO2. Its function is as follows. Catalyzes the reaction of cyanate with bicarbonate to produce ammonia and carbon dioxide. The polypeptide is Cyanate hydratase (Burkholderia lata (strain ATCC 17760 / DSM 23089 / LMG 22485 / NCIMB 9086 / R18194 / 383)).